The primary structure comprises 134 residues: MTGGKSGGKASGSKNAQSRSSKAGLAFPVGRVHRLLRKGNYAQRVGAGAPVYLAAVLEYLAAEILELAGNAARDNKKTRIIPRHLQLAIRNDEELNKLLGHVTIAQGGVLPNIHQNLLPKKTPKSGKGPGSQEL.

Residues 1–10 (MTGGKSGGKA) show a composition bias toward gly residues. Residues 1–24 (MTGGKSGGKASGSKNAQSRSSKAG) form a disordered region. N6-acetyllysine occurs at positions 5 and 9. Position 106 is an N5-methylglutamine (Gln106). The disordered stretch occupies residues 115-134 (QNLLPKKTPKSGKGPGSQEL). Position 131 is a phosphoserine (Ser131). Residues 131 to 132 (SQ) carry the [ST]-Q motif motif.

This sequence belongs to the histone H2A family. As to quaternary structure, the nucleosome is a histone octamer containing two molecules each of H2A, H2B, H3 and H4 assembled in one H3-H4 heterotetramer and two H2A-H2B heterodimers. The octamer wraps approximately 147 bp of DNA. Phosphorylated to form H2AS128ph (gamma-H2A) in response to DNA double-strand breaks (DSBs) generated by exogenous genotoxic agents and by stalled replication forks. Phosphorylation is dependent on the DNA damage checkpoint kinases mec1/ATR and tel1/ATM, spreads on either side of a detected DSB site and may mark the surrounding chromatin for recruitment of proteins required for DNA damage signaling and repair. Gamma-H2A is removed from the DNA prior to the strand invasion-primer extension step of the repair process and subsequently dephosphorylated. Dephosphorylation is necessary for efficient recovery from the DNA damage checkpoint. In terms of processing, acetylated by esa1 to form H2AK4ac and H2AK7ac.

The protein localises to the nucleus. Its subcellular location is the chromosome. Its function is as follows. Core component of nucleosome which plays a central role in DNA double strand break (DSB) repair. Nucleosomes wrap and compact DNA into chromatin, limiting DNA accessibility to the cellular machineries which require DNA as a template. Histones thereby play a central role in transcription regulation, DNA repair, DNA replication and chromosomal stability. DNA accessibility is regulated via a complex set of post-translational modifications of histones, also called histone code, and nucleosome remodeling. This chain is Histone H2A (httA), found in Aspergillus niger (strain ATCC MYA-4892 / CBS 513.88 / FGSC A1513).